The primary structure comprises 490 residues: Protoporphyrinogen oxidase (490 aa).

FAD is bound by residues 7-12 (GGGIAG), 32-33 (EK), W40, 61-64 (GPRT), and 466-468 (VSI).

It belongs to the protoporphyrinogen/coproporphyrinogen oxidase family. Protoporphyrinogen oxidase subfamily. It depends on FAD as a cofactor.

Its subcellular location is the mitochondrion. It catalyses the reaction protoporphyrinogen IX + 3 O2 = protoporphyrin IX + 3 H2O2. It functions in the pathway porphyrin-containing compound metabolism; protoporphyrin-IX biosynthesis; protoporphyrin-IX from protoporphyrinogen-IX: step 1/1. Catalyzes the 6-electron oxidation of protoporphyrinogen-IX to form protoporphyrin-IX. The polypeptide is Protoporphyrinogen oxidase (hem14) (Schizosaccharomyces pombe (strain 972 / ATCC 24843) (Fission yeast)).